A 207-amino-acid chain; its full sequence is ATP phosphoribosyltransferase (207 aa).

Belongs to the ATP phosphoribosyltransferase family. Short subfamily. Heteromultimer composed of HisG and HisZ subunits.

The protein resides in the cytoplasm. The catalysed reaction is 1-(5-phospho-beta-D-ribosyl)-ATP + diphosphate = 5-phospho-alpha-D-ribose 1-diphosphate + ATP. It participates in amino-acid biosynthesis; L-histidine biosynthesis; L-histidine from 5-phospho-alpha-D-ribose 1-diphosphate: step 1/9. In terms of biological role, catalyzes the condensation of ATP and 5-phosphoribose 1-diphosphate to form N'-(5'-phosphoribosyl)-ATP (PR-ATP). Has a crucial role in the pathway because the rate of histidine biosynthesis seems to be controlled primarily by regulation of HisG enzymatic activity. The protein is ATP phosphoribosyltransferase (hisG) of Dictyoglomus turgidum (strain DSM 6724 / Z-1310).